The primary structure comprises 297 residues: Formiminotransferase cyclodeaminase-like protein (297 aa).

Residues 2-196 (LREMLGCCKV…GVVAVGACGW (195 aa)) form a formiminotransferase N-subdomain region. His-89 (for formimidoyltransferase activity) is an active-site residue. 178 to 187 (GPQEVSKAKG) contributes to the folate binding site.

Belongs to the formiminotransferase family. Expressed constitutively in roots, stems, leaves and flowers.

Its subcellular location is the golgi apparatus. It localises to the trans-Golgi network. The catalysed reaction is (6S)-5-formyl-5,6,7,8-tetrahydrofolate + L-glutamate = N-formyl-L-glutamate + (6S)-5,6,7,8-tetrahydrofolate + H(+). It catalyses the reaction 5-formimidoyltetrahydrofolate + L-glutamate = N-formimidoyl-L-glutamate + (6S)-5,6,7,8-tetrahydrofolate. It functions in the pathway one-carbon metabolism; tetrahydrofolate interconversion. Functionally, involved in the regulation of root growth. May regulate sorting and/or transportation of trans-Golgi network (TGN) vesicles in root cap peripheral cells, thus influencing the extracellular secretion of mucilage components in the root cap. The sequence is that of Formiminotransferase cyclodeaminase-like protein from Arabidopsis thaliana (Mouse-ear cress).